Reading from the N-terminus, the 929-residue chain is uncharacterized protein (929 aa).

The interval 1–257 is disordered; it reads MARKGKVNTL…SVLSSDDNDS (257 aa). The span at 23–34 shows a compositional bias: basic and acidic residues; it reads KQLENKILHSYE. Composition is skewed to acidic residues over residues 35-50, 59-75, 107-117, 133-144, and 188-220; these read EESAGFDSEELEDNDE, SEDDEEIDSDEAFDEED, LNEEDDSDDSV, DENELVDLDTLL, and SESELTDSADNMNESDSESEIESSDSDHDDGEN. 3 positions are modified to phosphoserine: S251, S555, and S557. The segment at 602–729 is disordered; it reads DEMQAFEDEL…KADKKNHKLK (128 aa). Residues 605 to 619 show a composition bias toward acidic residues; the sequence is QAFEDELAGVPNEDD. Positions 670–681 are enriched in basic and acidic residues; that stretch reads NKPEMKEGQKKA. The segment covering 696-711 has biased composition (polar residues); it reads ETNPWLQVPDQRTSSA. The segment covering 712 to 729 has biased composition (basic and acidic residues); that stretch reads KKLDKNSSKADKKNHKLK. S758, S760, and S764 each carry phosphoserine. Basic and acidic residues predominate over residues 805-820; sequence KEDWVQEDAPKEEDHS. The segment at 805–843 is disordered; sequence KEDWVQEDAPKEEDHSLPGWGSWGGVGVKQRKTKPKVKK. Residues 833 to 843 show a composition bias toward basic residues; sequence KQRKTKPKVKK.

To yeast YML093w.

Its subcellular location is the nucleus. The protein resides in the nucleolus. This is an uncharacterized protein from Schizosaccharomyces pombe (strain 972 / ATCC 24843) (Fission yeast).